Reading from the N-terminus, the 219-residue chain is Interleukin-12 subunit alpha (219 aa).

The N-terminal stretch at 1–22 (MCPARSLLLVATLVLLDYLSLA) is a signal peptide. Asparagine 24 and asparagine 93 each carry an N-linked (GlcNAc...) asparagine glycan. 3 cysteine pairs are disulfide-bonded: cysteine 37-cysteine 110, cysteine 64-cysteine 196, and cysteine 85-cysteine 123.

The protein belongs to the IL-6 superfamily. In terms of assembly, heterodimer with IL12B; disulfide-linked. This heterodimer is known as interleukin IL-12. Heterodimer with EBI3/IL27B; not disulfide-linked. This heterodimer is known as interleukin IL-35. Interacts with NBR1; this interaction promotes IL-12 secretion.

It is found in the secreted. Heterodimerizes with IL12B to form the IL-12 cytokine or with EBI3/IL27B to form the IL-35 cytokine. IL-12 is primarily produced by professional antigen-presenting cells (APCs) such as B-cells and dendritic cells (DCs) as well as macrophages and granulocytes and regulates T-cell and natural killer-cell responses, induces the production of interferon-gamma (IFN-gamma), favors the differentiation of T-helper 1 (Th1) cells and is an important link between innate resistance and adaptive immunity. Mechanistically, exerts its biological effects through a receptor composed of IL12R1 and IL12R2 subunits. Binding to the receptor results in the rapid tyrosine phosphorylation of a number of cellular substrates including the JAK family kinases TYK2 and JAK2. In turn, recruited STAT4 gets phosphorylated and translocates to the nucleus where it regulates cytokine/growth factor responsive genes. As part of IL-35, plays essential roles in maintaining the immune homeostasis of the liver microenvironment and also functions as an immune-suppressive cytokine. Mediates biological events through unconventional receptors composed of IL12RB2 and gp130/IL6ST heterodimers or homodimers. Signaling requires the transcription factors STAT1 and STAT4, which form a unique heterodimer that binds to distinct DNA sites. This is Interleukin-12 subunit alpha (IL12A) from Papio anubis (Olive baboon).